We begin with the raw amino-acid sequence, 349 residues long: Probable FBD-associated F-box protein At5g38565 (349 aa).

An F-box domain is found at 1–47 (MDIFNGLPDDVLVKILSFVPTKVAVSTSILSKRWEFLWMWLPRLDFG). The 49-residue stretch at 263-311 (CWNQPISVPECLLESLQIFNLSHYFGKQQDLDFVVYILKNACHLKTATI) folds into the FBD domain.

The polypeptide is Probable FBD-associated F-box protein At5g38565 (Arabidopsis thaliana (Mouse-ear cress)).